A 238-amino-acid polypeptide reads, in one-letter code: ATP synthase subunit a (238 aa).

The next 5 helical transmembrane spans lie at 18 to 38, 75 to 95, 112 to 132, 179 to 199, and 203 to 223; these read LTILAMSLLTITIIFILVFWA, YSLLMFILFSFVFVANNLGLM, NFGVDITLSLLVAFICHIEGI, VVTGLLLQLAVLSPFTGPLAF, and IVWTAFSMFIGFIQAYVFIIL.

The protein belongs to the ATPase A chain family. In terms of assembly, F-type ATPases have 2 components, CF(1) - the catalytic core - and CF(0) - the membrane proton channel. CF(1) has five subunits: alpha(3), beta(3), gamma(1), delta(1), epsilon(1). CF(0) has three main subunits: a(1), b(2) and c(9-12). The alpha and beta chains form an alternating ring which encloses part of the gamma chain. CF(1) is attached to CF(0) by a central stalk formed by the gamma and epsilon chains, while a peripheral stalk is formed by the delta and b chains.

The protein resides in the cell membrane. Functionally, key component of the proton channel; it plays a direct role in the translocation of protons across the membrane. The chain is ATP synthase subunit a from Streptococcus agalactiae serotype III (strain NEM316).